The primary structure comprises 297 residues: Protein COFACTOR ASSEMBLY OF COMPLEX C SUBUNIT B CCB4, chloroplastic (297 aa).

The transit peptide at 1–33 directs the protein to the chloroplast; it reads MEARIILLRIQIPWSANRQFSHPPLDFPRFIRA. Topologically, residues 34–70 are stromal; the sequence is SSSSTSQKPKTYEGPKPRKNLVADFISKNDDLVRSLP. Residues 71–91 traverse the membrane as a helical segment; that stretch reads IYVGGASLLAVLFNRTVSGIA. Residues 92-103 lie on the Lumenal side of the membrane; it reads PVADASSSQSRA. A helical transmembrane segment spans residues 104–124; it reads DLLALGLAVTNLLTGLVWLSI. Over 125-297 the chain is Stromal; the sequence is RPKSITPVNP…DSDEISRVTV (173 aa).

The protein resides in the plastid. Its subcellular location is the chloroplast thylakoid membrane. Its function is as follows. Required for the biogenesis and accumulation of native cytochrome b6 in the thylakoid membrane. Controls the conversion of apocytochrome b6 to holocytochrome b6. Required for covalent binding of the c-type heme to cytochrome b6. The chain is Protein COFACTOR ASSEMBLY OF COMPLEX C SUBUNIT B CCB4, chloroplastic from Arabidopsis thaliana (Mouse-ear cress).